A 425-amino-acid chain; its full sequence is Glutamyl-tRNA(Gln) amidotransferase subunit D (425 aa).

Positions Glu53 to Leu84 are disordered. The segment covering Gly68–Ser80 has biased composition (basic and acidic residues). In terms of domain architecture, Asparaginase/glutaminase spans Pro85–Asn414. Active-site residues include Thr95, Thr171, Asp172, and Lys248.

It belongs to the asparaginase 1 family. GatD subfamily. In terms of assembly, heterodimer of GatD and GatE.

It carries out the reaction L-glutamyl-tRNA(Gln) + L-glutamine + ATP + H2O = L-glutaminyl-tRNA(Gln) + L-glutamate + ADP + phosphate + H(+). Allows the formation of correctly charged Gln-tRNA(Gln) through the transamidation of misacylated Glu-tRNA(Gln) in organisms which lack glutaminyl-tRNA synthetase. The reaction takes place in the presence of glutamine and ATP through an activated gamma-phospho-Glu-tRNA(Gln). The GatDE system is specific for glutamate and does not act on aspartate. The chain is Glutamyl-tRNA(Gln) amidotransferase subunit D from Methanosarcina mazei (strain ATCC BAA-159 / DSM 3647 / Goe1 / Go1 / JCM 11833 / OCM 88) (Methanosarcina frisia).